A 65-amino-acid chain; its full sequence is Hirudin-2 (65 aa).

The interaction with thrombin active site stretch occupies residues 1–3 (ITY). 3 cysteine pairs are disulfide-bonded: Cys6–Cys14, Cys16–Cys28, and Cys22–Cys39. Positions 39 to 65 (CVTGEGTPKPQSHNDGDFEEIPEEYLQ) are disordered. O-linked (GalNAc...) threonine glycosylation is present at Thr45. The interaction with fibrinogen-binding exosite of thrombin stretch occupies residues 55–65 (DFEEIPEEYLQ). Acidic residues predominate over residues 55–65 (DFEEIPEEYLQ). Sulfotyrosine is present on Tyr63.

The protein belongs to the protease inhibitor I14 (hirudin) family.

Its subcellular location is the secreted. In terms of biological role, hirudin is a potent thrombin-specific protease inhibitor. It forms a stable non-covalent complex with alpha-thrombin, thereby abolishing its ability to cleave fibrinogen. The protein is Hirudin-2 of Hirudo medicinalis (Medicinal leech).